Consider the following 263-residue polypeptide: HTH-type transcriptional repressor NanR (263 aa).

A disordered region spans residues 1-22; sequence MGLMNAFDSQTEDSSPAIGRNL. An HTH gntR-type domain is found at 30–98; sequence KKLSEMVEEE…NGERARVSRP (69 aa). A DNA-binding region (H-T-H motif) is located at residues 58–77; the sequence is ERELMAFFNVGRPSVREALA.

The protein belongs to the NanR family.

Transcriptional repressor that controls expression of the genes required for the catabolism of sialic acids. The polypeptide is HTH-type transcriptional repressor NanR (Escherichia coli (strain 55989 / EAEC)).